Here is a 776-residue protein sequence, read N- to C-terminus: Photosystem I P700 chlorophyll a apoprotein A1 (776 aa).

8 helical membrane-spanning segments follow: residues 76–99, 162–185, 201–225, 309–327, 368–391, 407–433, 455–477, and 557–575; these read IFSA…FHGA, LMAL…FHYH, LQHH…HVAN, VAHH…GHVY, WHAQ…HHMY, LGLF…IAVI, AIIS…LYIH, and LMIH…LILL. 2 residues coordinate [4Fe-4S] cluster: C599 and C608. The next 2 membrane-spanning stretches (helical) occupy residues 615–636 and 690–712; these read HVFL…YFSW and LSGY…MFLF. Residue H701 coordinates divinylchlorophyll a'. Residues M709 and Y717 each coordinate divinyl chlorophyll a. W718 contacts phylloquinone. A helical transmembrane segment spans residues 750 to 770; that stretch reads AVGVTHFLFGGIVTTWAFFHA.

Belongs to the PsaA/PsaB family. In terms of assembly, the PsaA/B heterodimer binds the P700 divinyl chlorophyll special pair and subsequent electron acceptors. PSI consists of a core antenna complex that captures photons, and an electron transfer chain that converts photonic excitation into a charge separation. The cyanobacterial PSI reaction center is composed of one copy each of PsaA,B,C,D,E,F,I,J,K,L,M and X, and forms trimeric complexes. PSI electron transfer chain: 5 divinyl chlorophyll a, 1 divinyl chlorophyll a', 2 phylloquinones and 3 4Fe-4S clusters. PSI core antenna: 90 divinyl chlorophyll a, 22 carotenoids, 3 phospholipids and 1 galactolipid. P700 is a divinyl chlorophyll a/divinyl chlorophyll a' dimer, A0 is one or more divinyl chlorophyll a, A1 is one or both phylloquinones and FX is a shared 4Fe-4S iron-sulfur center. serves as cofactor.

The protein localises to the cellular thylakoid membrane. The catalysed reaction is reduced [plastocyanin] + hnu + oxidized [2Fe-2S]-[ferredoxin] = oxidized [plastocyanin] + reduced [2Fe-2S]-[ferredoxin]. In terms of biological role, psaA and PsaB bind P700, the primary electron donor of photosystem I (PSI), as well as the electron acceptors A0, A1 and FX. PSI is a plastocyanin/cytochrome c6-ferredoxin oxidoreductase, converting photonic excitation into a charge separation, which transfers an electron from the donor P700 chlorophyll pair to the spectroscopically characterized acceptors A0, A1, FX, FA and FB in turn. Oxidized P700 is reduced on the lumenal side of the thylakoid membrane by plastocyanin or cytochrome c6. The protein is Photosystem I P700 chlorophyll a apoprotein A1 of Prochlorococcus marinus (strain MIT 9303).